The chain runs to 137 residues: Gonadotropin subunit beta-2 (137 aa).

Positions 1-24 (MLPFMLSSFLGASPSIWPLAPAEA) are cleaved as a signal peptide. 6 disulfides stabilise this stretch: cysteine 30-cysteine 76, cysteine 44-cysteine 91, cysteine 47-cysteine 129, cysteine 55-cysteine 107, cysteine 59-cysteine 109, and cysteine 112-cysteine 119. N-linked (GlcNAc...) asparagine glycosylation is present at asparagine 34.

It belongs to the glycoprotein hormones subunit beta family. As to quaternary structure, heterodimer of an alpha and a beta chain.

Its subcellular location is the secreted. Its function is as follows. Involved in gametogenesis and steroidogenesis. This is Gonadotropin subunit beta-2 (cgbb) from Acanthopagrus latus (Yellowfin seabream).